A 310-amino-acid chain; its full sequence is UDP-N-acetylenolpyruvoylglucosamine reductase (310 aa).

In terms of domain architecture, FAD-binding PCMH-type spans Lys23–Gly188. The active site involves Arg168. Ser217 acts as the Proton donor in catalysis. Residue Glu287 is part of the active site.

The protein belongs to the MurB family. FAD is required as a cofactor.

Its subcellular location is the cytoplasm. The enzyme catalyses UDP-N-acetyl-alpha-D-muramate + NADP(+) = UDP-N-acetyl-3-O-(1-carboxyvinyl)-alpha-D-glucosamine + NADPH + H(+). Its pathway is cell wall biogenesis; peptidoglycan biosynthesis. In terms of biological role, cell wall formation. This Rickettsia bellii (strain OSU 85-389) protein is UDP-N-acetylenolpyruvoylglucosamine reductase.